A 1399-amino-acid chain; its full sequence is DNA-directed RNA polymerase subunit beta' (1399 aa).

Zn(2+) contacts are provided by cysteine 70, cysteine 72, cysteine 85, and cysteine 88. The Mg(2+) site is built by aspartate 460, aspartate 462, and aspartate 464. 4 residues coordinate Zn(2+): cysteine 814, cysteine 888, cysteine 895, and cysteine 898.

Belongs to the RNA polymerase beta' chain family. The RNAP catalytic core consists of 2 alpha, 1 beta, 1 beta' and 1 omega subunit. When a sigma factor is associated with the core the holoenzyme is formed, which can initiate transcription. Mg(2+) is required as a cofactor. The cofactor is Zn(2+).

It carries out the reaction RNA(n) + a ribonucleoside 5'-triphosphate = RNA(n+1) + diphosphate. Its function is as follows. DNA-dependent RNA polymerase catalyzes the transcription of DNA into RNA using the four ribonucleoside triphosphates as substrates. In Pseudomonas fluorescens (strain Pf0-1), this protein is DNA-directed RNA polymerase subunit beta'.